Consider the following 260-residue polypeptide: Indole-3-glycerol phosphate synthase (260 aa).

The protein belongs to the TrpC family.

The enzyme catalyses 1-(2-carboxyphenylamino)-1-deoxy-D-ribulose 5-phosphate + H(+) = (1S,2R)-1-C-(indol-3-yl)glycerol 3-phosphate + CO2 + H2O. It participates in amino-acid biosynthesis; L-tryptophan biosynthesis; L-tryptophan from chorismate: step 4/5. This is Indole-3-glycerol phosphate synthase from Lactiplantibacillus plantarum (strain ATCC BAA-793 / NCIMB 8826 / WCFS1) (Lactobacillus plantarum).